Consider the following 696-residue polypeptide: Solute carrier family 53 member 1 (696 aa).

Topologically, residues Met1–Pro228 are cytoplasmic. The 223-residue stretch at Lys2 to Gly224 folds into the SPX domain. The segment at Lys158 to Lys165 is important for inositol polyphosphate binding. Residues Ala229 to Leu259 form a helical membrane-spanning segment. The Extracellular portion of the chain corresponds to Glu260–Ser264. Residues Ile265–Gly296 traverse the membrane as a helical segment. Topologically, residues Val297 to Ser309 are cytoplasmic. The helical transmembrane segment at Asn310–Ala337 threads the bilayer. Residues Pro338–Pro343 lie on the Extracellular side of the membrane. Residues Thr344–Thr365 form a helical membrane-spanning segment. Residues Phe366–Thr383 constitute an intramembrane region (helical). Topologically, residues Ala384 to Lys388 are cytoplasmic. The discontinuously helical transmembrane segment at Val389–Lys422 threads the bilayer. Asp398 and Asn401 together coordinate phosphate. At Trp423–Leu429 the chain is on the extracellular side. Residues Leu430–Lys471 traverse the membrane as a discontinuously helical segment. Residues Ile439–Glu643 form the EXS domain. Arg472 is a topological domain (cytoplasmic). The helical transmembrane segment at Ala473–Gly503 threads the bilayer. Phosphate is bound by residues Lys482 and Tyr483. The Extracellular segment spans residues His504–Asp506. Residues Thr507–Trp534 form a helical membrane-spanning segment. Over Gly535–Tyr553 the chain is Cytoplasmic. Residues Pro554–Leu585 traverse the membrane as a discontinuously helical segment. Arg570 contacts phosphate. Topologically, residues Pro586 to His587 are extracellular. The helical transmembrane segment at Ser588–Val626 threads the bilayer. Residues Arg603 and Arg604 each contribute to the phosphate site. Residues Arg627 to Thr696 are Cytoplasmic-facing. The residue at position 668 (Ser668) is a Phosphoserine. The interval Arg673–Thr696 is disordered. Residue Thr690 is modified to Phosphothreonine.

Belongs to the SYG1 (TC 2.A.94) family. Homodimer. As to expression, widely expressed. Detected in spleen, lymph node, thymus, leukocytes, bone marrow, heart, kidney, pancreas and skeletal muscle.

Its subcellular location is the cell membrane. The enzyme catalyses phosphate(in) = phosphate(out). Its activity is regulated as follows. Allosterically activated by inositol hexakisphosphate (Ins6P). Functionally, inorganic ion transporter that mediates phosphate ion export across plasma membrane. Plays a major role in phosphate homeostasis, preventing intracellular phosphate accumulation and possible calcium phosphate precipitation, ultimately preserving calcium signaling. Binds inositol hexakisphosphate (Ins6P) and similar inositol polyphosphates, such as 5-diphospho-inositol pentakisphosphate (5-InsP7), which are important intracellular signaling molecules involved in regulation of phosphate flux. This chain is Solute carrier family 53 member 1, found in Homo sapiens (Human).